The primary structure comprises 38 residues: Large ribosomal subunit protein bL36 (38 aa).

This sequence belongs to the bacterial ribosomal protein bL36 family.

This Proteus mirabilis (strain HI4320) protein is Large ribosomal subunit protein bL36.